The following is a 409-amino-acid chain: Inactive serine protease 35 (409 aa).

The N-terminal stretch at 1–17 (MLLWLIFFTPGWTLIDG) is a signal peptide. Residues asparagine 87 and asparagine 107 are each glycosylated (N-linked (GlcNAc...) asparagine). A Peptidase S1 domain is found at 120-404 (VYGTDSRFSI…ICLWIHGNDA (285 aa)). The cysteines at positions 150 and 166 are disulfide-linked. Basic residues predominate over residues 188-203 (RNKSGGKKRRGSKRSR). The tract at residues 188-246 (RNKSGGKKRRGSKRSRRETSGGDQREGPREHLQDRVKAGRRRKQSGGGQRVSEGRPSFR) is disordered. A compositionally biased stretch (basic and acidic residues) spans 204–224 (RETSGGDQREGPREHLQDRVK).

The protein belongs to the peptidase S1 family.

Its subcellular location is the secreted. The chain is Inactive serine protease 35 (PRSS35) from Macaca mulatta (Rhesus macaque).